A 362-amino-acid chain; its full sequence is UDP-N-acetylglucosamine--N-acetylmuramyl-(pentapeptide) pyrophosphoryl-undecaprenol N-acetylglucosamine transferase (362 aa).

Residues 15-17, asparagine 127, arginine 165, serine 191, isoleucine 247, 266-271, and glutamine 292 each bind UDP-N-acetyl-alpha-D-glucosamine; these read TGG and ALTVSE.

Belongs to the glycosyltransferase 28 family. MurG subfamily.

It localises to the cell inner membrane. The catalysed reaction is di-trans,octa-cis-undecaprenyl diphospho-N-acetyl-alpha-D-muramoyl-L-alanyl-D-glutamyl-meso-2,6-diaminopimeloyl-D-alanyl-D-alanine + UDP-N-acetyl-alpha-D-glucosamine = di-trans,octa-cis-undecaprenyl diphospho-[N-acetyl-alpha-D-glucosaminyl-(1-&gt;4)]-N-acetyl-alpha-D-muramoyl-L-alanyl-D-glutamyl-meso-2,6-diaminopimeloyl-D-alanyl-D-alanine + UDP + H(+). Its pathway is cell wall biogenesis; peptidoglycan biosynthesis. Cell wall formation. Catalyzes the transfer of a GlcNAc subunit on undecaprenyl-pyrophosphoryl-MurNAc-pentapeptide (lipid intermediate I) to form undecaprenyl-pyrophosphoryl-MurNAc-(pentapeptide)GlcNAc (lipid intermediate II). In Shewanella putrefaciens (strain CN-32 / ATCC BAA-453), this protein is UDP-N-acetylglucosamine--N-acetylmuramyl-(pentapeptide) pyrophosphoryl-undecaprenol N-acetylglucosamine transferase.